Consider the following 177-residue polypeptide: Interleukin-19 (177 aa).

The N-terminal stretch at 1–24 is a signal peptide; the sequence is MKLQCVSLWLLGTILILCSVDNHG. 3 disulfides stabilise this stretch: Cys28–Cys121, Cys75–Cys127, and Cys76–Cys129. A glycan (N-linked (GlcNAc...) asparagine) is linked at Asn56. N-linked (GlcNAc...) asparagine glycosylation occurs at Asn135.

It belongs to the IL-10 family.

The protein resides in the secreted. Cytokine that functions as an anti-inflammatory and proangiogenic factor. Polarizes adaptive immunity to an anti-inflammatory phenotype through induction of T-helper 2 responses by both down-regulation of IFN-gamma and up-regulation of IL4 and IL13. Produced by osteocytes, stimulates granulopoiesis and neutrophil formation. Exerts its biological effect through a receptor complex consisting of a heterodimer of IL20RA and IL20RB. In turn, activates the Janus kinase (JAK) and signal transducer and activator of transcription (STAT) pathway, and importantly, STAT3. In Homo sapiens (Human), this protein is Interleukin-19 (IL19).